The following is a 562-amino-acid chain: Potassium-transporting ATPase potassium-binding subunit (562 aa).

12 helical membrane-spanning segments follow: residues 6–26 (FLLI…LGGF), 63–83 (ALAI…LLMA), 132–152 (GLTV…FALI), 175–195 (LYVL…QGVL), 253–273 (FVQM…FGQV), 283–303 (LIWA…YAEL), 327–347 (FGIL…CGAV), 356–376 (ALGG…FGGV), 379–399 (GLYG…LMIG), 416–436 (MTAL…ALAL), 483–503 (LLLA…VLAI), and 526–546 (LFIG…FIPA).

It belongs to the KdpA family. The system is composed of three essential subunits: KdpA, KdpB and KdpC.

Its subcellular location is the cell inner membrane. Functionally, part of the high-affinity ATP-driven potassium transport (or Kdp) system, which catalyzes the hydrolysis of ATP coupled with the electrogenic transport of potassium into the cytoplasm. This subunit binds the periplasmic potassium ions and delivers the ions to the membrane domain of KdpB through an intramembrane tunnel. This Yersinia pseudotuberculosis serotype O:1b (strain IP 31758) protein is Potassium-transporting ATPase potassium-binding subunit.